A 146-amino-acid chain; its full sequence is Large ribosomal subunit protein uL15 (146 aa).

The span at 1 to 13 (MKLHELKPAEGSR) shows a compositional bias: basic and acidic residues. A disordered region spans residues 1–65 (MKLHELKPAE…PLYRRLPKRG (65 aa)). Composition is skewed to gly residues over residues 21–31 (RGIGSGNGKTA) and 42–52 (SGGGVRPGFEG).

This sequence belongs to the universal ribosomal protein uL15 family. Part of the 50S ribosomal subunit.

In terms of biological role, binds to the 23S rRNA. In Halalkalibacterium halodurans (strain ATCC BAA-125 / DSM 18197 / FERM 7344 / JCM 9153 / C-125) (Bacillus halodurans), this protein is Large ribosomal subunit protein uL15.